Here is a 615-residue protein sequence, read N- to C-terminus: DNA mismatch repair protein MutL (615 aa).

The segment at 363 to 397 (FAEPAVREPVAPRYTPAPASGSRPAAPWPNAQPGY) is disordered. Residues 378-391 (PAPASGSRPAAPWP) show a composition bias toward low complexity.

It belongs to the DNA mismatch repair MutL/HexB family.

This protein is involved in the repair of mismatches in DNA. It is required for dam-dependent methyl-directed DNA mismatch repair. May act as a 'molecular matchmaker', a protein that promotes the formation of a stable complex between two or more DNA-binding proteins in an ATP-dependent manner without itself being part of a final effector complex. The protein is DNA mismatch repair protein MutL of Escherichia coli O157:H7.